A 448-amino-acid chain; its full sequence is Methylenetetrahydrofolate--tRNA-(uracil-5-)-methyltransferase TrmFO (448 aa).

Position 13-18 (13-18 (GAGLAG)) interacts with FAD.

This sequence belongs to the MnmG family. TrmFO subfamily. FAD is required as a cofactor.

Its subcellular location is the cytoplasm. The enzyme catalyses uridine(54) in tRNA + (6R)-5,10-methylene-5,6,7,8-tetrahydrofolate + NADH + H(+) = 5-methyluridine(54) in tRNA + (6S)-5,6,7,8-tetrahydrofolate + NAD(+). It carries out the reaction uridine(54) in tRNA + (6R)-5,10-methylene-5,6,7,8-tetrahydrofolate + NADPH + H(+) = 5-methyluridine(54) in tRNA + (6S)-5,6,7,8-tetrahydrofolate + NADP(+). Its function is as follows. Catalyzes the folate-dependent formation of 5-methyl-uridine at position 54 (M-5-U54) in all tRNAs. The protein is Methylenetetrahydrofolate--tRNA-(uracil-5-)-methyltransferase TrmFO of Streptococcus pyogenes serotype M4 (strain MGAS10750).